The chain runs to 123 residues: Fluoride-specific ion channel FluC (123 aa).

The next 4 helical transmembrane spans lie at 1-21 (MQWL…GWLA), 32-52 (LGTL…LVWF), 66-86 (FVIT…AEVF), and 94-114 (LLAA…ATAL). 2 residues coordinate Na(+): Gly73 and Thr76.

This sequence belongs to the fluoride channel Fluc/FEX (TC 1.A.43) family.

It localises to the cell inner membrane. It catalyses the reaction fluoride(in) = fluoride(out). Na(+) is not transported, but it plays an essential structural role and its presence is essential for fluoride channel function. Functionally, fluoride-specific ion channel. Important for reducing fluoride concentration in the cell, thus reducing its toxicity. The sequence is that of Fluoride-specific ion channel FluC from Psychrobacter arcticus (strain DSM 17307 / VKM B-2377 / 273-4).